A 132-amino-acid polypeptide reads, in one-letter code: Transmembrane protein C1orf162 homolog (132 aa).

The chain crosses the membrane as a helical span at residues 36–56 (IILAFFAGVLLTLLIVALIFL). The interval 95–132 (TFKPPEENSNDLTRNHSSGLEPTIYSQIKVTDSDLPLP) is disordered. Polar residues predominate over residues 104–124 (NDLTRNHSSGLEPTIYSQIKV). At S111 the chain carries Phosphoserine.

The protein localises to the membrane. The chain is Transmembrane protein C1orf162 homolog from Mus musculus (Mouse).